Consider the following 222-residue polypeptide: Probable fructose-6-phosphate aldolase (222 aa).

K87 serves as the catalytic Schiff-base intermediate with substrate.

The protein belongs to the transaldolase family. Type 3A subfamily.

The protein resides in the cytoplasm. The catalysed reaction is beta-D-fructose 6-phosphate = dihydroxyacetone + D-glyceraldehyde 3-phosphate. In terms of biological role, catalyzes the reversible formation of fructose 6-phosphate from dihydroxyacetone and D-glyceraldehyde 3-phosphate via an aldolization reaction. The chain is Probable fructose-6-phosphate aldolase from Streptococcus pneumoniae (strain ATCC 700669 / Spain 23F-1).